We begin with the raw amino-acid sequence, 299 residues long: MTTVIDGKNVAASVIETVKSATSALESETGVRAGLAVVIVGDDPASHTYVSAKSRMAKECGFLSVQHTLPEETSQEELAALVAELNADPSIHGILVQLPLPKHLRSEPIIQSILPEKDVDGLHVVNAGKLATGDLEGGLVSCTPAGAMVFVRRTYGDDLSGLNAVVIGRSNLFGKPMSALLLAANATVTTAHSRTKDLAAVCRNADILVAAVGRPEMVKADWVKPGAMVVDVGINRVPAPERGEGRTKLVGDVAFDECAKVAGVITPVPGGVGPMTIAMLMANTIIAACRMAGRKPPKF.

NADP(+)-binding positions include Gly-168 to Ser-170, Ser-193, and Ile-234.

This sequence belongs to the tetrahydrofolate dehydrogenase/cyclohydrolase family. As to quaternary structure, homodimer.

The catalysed reaction is (6R)-5,10-methylene-5,6,7,8-tetrahydrofolate + NADP(+) = (6R)-5,10-methenyltetrahydrofolate + NADPH. It catalyses the reaction (6R)-5,10-methenyltetrahydrofolate + H2O = (6R)-10-formyltetrahydrofolate + H(+). The protein operates within one-carbon metabolism; tetrahydrofolate interconversion. Catalyzes the oxidation of 5,10-methylenetetrahydrofolate to 5,10-methenyltetrahydrofolate and then the hydrolysis of 5,10-methenyltetrahydrofolate to 10-formyltetrahydrofolate. The sequence is that of Bifunctional protein FolD 2 from Rhizobium meliloti (strain 1021) (Ensifer meliloti).